A 421-amino-acid polypeptide reads, in one-letter code: Serine--tRNA ligase (421 aa).

An L-serine-binding site is contributed by 231–233 (TAE). 262-264 (RRE) contributes to the ATP binding site. Glu285 contributes to the L-serine binding site. 349-352 (EISS) contacts ATP. Ser384 lines the L-serine pocket.

Belongs to the class-II aminoacyl-tRNA synthetase family. Type-1 seryl-tRNA synthetase subfamily. As to quaternary structure, homodimer. The tRNA molecule binds across the dimer.

Its subcellular location is the cytoplasm. It carries out the reaction tRNA(Ser) + L-serine + ATP = L-seryl-tRNA(Ser) + AMP + diphosphate + H(+). It catalyses the reaction tRNA(Sec) + L-serine + ATP = L-seryl-tRNA(Sec) + AMP + diphosphate + H(+). The protein operates within aminoacyl-tRNA biosynthesis; selenocysteinyl-tRNA(Sec) biosynthesis; L-seryl-tRNA(Sec) from L-serine and tRNA(Sec): step 1/1. In terms of biological role, catalyzes the attachment of serine to tRNA(Ser). Is also able to aminoacylate tRNA(Sec) with serine, to form the misacylated tRNA L-seryl-tRNA(Sec), which will be further converted into selenocysteinyl-tRNA(Sec). The chain is Serine--tRNA ligase from Hydrogenobaculum sp. (strain Y04AAS1).